The following is a 199-amino-acid chain: CASP-like protein 4C1 (199 aa).

The Cytoplasmic segment spans residues 1-35; the sequence is MESGSVANDSGPLNSTPDVHLYGKTAAMKQRRSNT. Residues 36-56 form a helical membrane-spanning segment; the sequence is MLFVFRLLTFSFSLAAVLVMG. Residues 57-80 are Extracellular-facing; sequence TNKQKIRSAPQYLEVAWHDFDPFR. A helical membrane pass occupies residues 81–101; the sequence is YVFAVNAIICVYSFVETWLAV. The Cytoplasmic portion of the chain corresponds to 102–124; it reads YTLSRGTLLLPETFQVWFDYGHD. The chain crosses the membrane as a helical span at residues 125–145; it reads QGFACLLFSANSVGIAMAQLL. Residues 146–169 lie on the Extracellular side of the membrane; sequence QSGSTLIQGQYYCSDAGAYCTQAR. Residues 170–190 form a helical membrane-spanning segment; the sequence is VSIAMGFGAFLFLALSSFLTG. The Cytoplasmic segment spans residues 191-199; it reads LRVARWYLP.

Belongs to the Casparian strip membrane proteins (CASP) family. As to quaternary structure, homodimer and heterodimers.

Its subcellular location is the cell membrane. This Physcomitrium patens (Spreading-leaved earth moss) protein is CASP-like protein 4C1.